Reading from the N-terminus, the 173-residue chain is RxLR effector protein PITG_10232 (173 aa).

The first 24 residues, 1 to 24, serve as a signal peptide directing secretion; that stretch reads MRLGYLIVGCAVALLATTDGVVDA. A disordered region spans residues 25 to 64; that stretch reads SSKHKQLSTDVPRPADDISSERFLRSQDTPEDDGNPAHED. Residues 37 to 49 show a composition bias toward basic and acidic residues; sequence RPADDISSERFLR. The RxLR-dEER signature appears at 46–65; sequence RFLRSQDTPEDDGNPAHEDR.

It belongs to the RxLR effector family.

The protein localises to the secreted. It is found in the host nucleus. It localises to the host cytoplasm. Its function is as follows. Effector that leads to host programmed cell death. In Phytophthora infestans (strain T30-4) (Potato late blight agent), this protein is RxLR effector protein PITG_10232.